The sequence spans 551 residues: Chitinase (551 aa).

Positions 1–17 (MLYKLLNVLWLVAVSNA) are cleaved as a signal peptide. The interval 1-149 (MLYKLLNVLW…NKPGRREDKI (149 aa)) is chitin binding domain (CBD). Positions 148-548 (KIVAAYFVEW…NAINAQFKPK (401 aa)) constitute a GH18 domain. N173 carries an N-linked (GlcNAc...) asparagine; by host glycan. E305 serves as the catalytic Proton donor. An N-linked (GlcNAc...) asparagine; by host glycan is attached at N444. Residues 548–551 (KDEL) carry the Prevents secretion from ER motif.

The protein belongs to the glycosyl hydrolase 18 family. Chitinase class II subfamily. As to quaternary structure, interacts with host VCATH.

It is found in the host endoplasmic reticulum lumen. The catalysed reaction is Random endo-hydrolysis of N-acetyl-beta-D-glucosaminide (1-&gt;4)-beta-linkages in chitin and chitodextrins.. In terms of biological role, plays a role in host liquefaction to facilitate horizontal transmission of the virus by hydrolyzing beta-chitin and by regulating the cysteine protease VCATH. Localized in the host reticulum endoplasmic via its KDEL motif, interacts with and thus prevents VCATH secretion before host cell lysis occurs. This is Chitinase (CHIA) from Lepidoptera (butterflies and moths).